The primary structure comprises 476 residues: Aspartyl/glutamyl-tRNA(Asn/Gln) amidotransferase subunit B (476 aa).

The protein belongs to the GatB/GatE family. GatB subfamily. Heterotrimer of A, B and C subunits.

The enzyme catalyses L-glutamyl-tRNA(Gln) + L-glutamine + ATP + H2O = L-glutaminyl-tRNA(Gln) + L-glutamate + ADP + phosphate + H(+). The catalysed reaction is L-aspartyl-tRNA(Asn) + L-glutamine + ATP + H2O = L-asparaginyl-tRNA(Asn) + L-glutamate + ADP + phosphate + 2 H(+). Its function is as follows. Allows the formation of correctly charged Asn-tRNA(Asn) or Gln-tRNA(Gln) through the transamidation of misacylated Asp-tRNA(Asn) or Glu-tRNA(Gln) in organisms which lack either or both of asparaginyl-tRNA or glutaminyl-tRNA synthetases. The reaction takes place in the presence of glutamine and ATP through an activated phospho-Asp-tRNA(Asn) or phospho-Glu-tRNA(Gln). The protein is Aspartyl/glutamyl-tRNA(Asn/Gln) amidotransferase subunit B of Listeria monocytogenes serovar 1/2a (strain ATCC BAA-679 / EGD-e).